Consider the following 504-residue polypeptide: UDP-N-acetylmuramoylalanine--D-glutamate ligase (504 aa).

ATP is bound at residue 129–135 (GTNGKTT).

This sequence belongs to the MurCDEF family.

It localises to the cytoplasm. It carries out the reaction UDP-N-acetyl-alpha-D-muramoyl-L-alanine + D-glutamate + ATP = UDP-N-acetyl-alpha-D-muramoyl-L-alanyl-D-glutamate + ADP + phosphate + H(+). It participates in cell wall biogenesis; peptidoglycan biosynthesis. Its function is as follows. Cell wall formation. Catalyzes the addition of glutamate to the nucleotide precursor UDP-N-acetylmuramoyl-L-alanine (UMA). The protein is UDP-N-acetylmuramoylalanine--D-glutamate ligase of Burkholderia mallei (strain NCTC 10247).